We begin with the raw amino-acid sequence, 249 residues long: Ubiquinone biosynthesis O-methyltransferase (249 aa).

4 residues coordinate S-adenosyl-L-methionine: arginine 44, glycine 75, aspartate 96, and methionine 138.

This sequence belongs to the methyltransferase superfamily. UbiG/COQ3 family.

It catalyses the reaction a 3-demethylubiquinol + S-adenosyl-L-methionine = a ubiquinol + S-adenosyl-L-homocysteine + H(+). The enzyme catalyses a 3-(all-trans-polyprenyl)benzene-1,2-diol + S-adenosyl-L-methionine = a 2-methoxy-6-(all-trans-polyprenyl)phenol + S-adenosyl-L-homocysteine + H(+). The protein operates within cofactor biosynthesis; ubiquinone biosynthesis. Its function is as follows. O-methyltransferase that catalyzes the 2 O-methylation steps in the ubiquinone biosynthetic pathway. This Paramagnetospirillum magneticum (strain ATCC 700264 / AMB-1) (Magnetospirillum magneticum) protein is Ubiquinone biosynthesis O-methyltransferase.